We begin with the raw amino-acid sequence, 416 residues long: MAIQAPKGTKDLLPMDSYKWHYIEDKLKKLAAEYALKEIRTPAFEHTELFERGVGETTDVVQKEMYTFKDKGDRSITLKPEGTAPAARAFIENGLFNEALPIKMFYFTPVFRYENVQKGRLREHHQFGVEVFGSTEASVDAELIGLAMRAFKEFRIDNLELNINNIGCPECRKKYNDALREYFRESYDELCDTCKTRFERNPMRLLDCKNKKCKEIGKDAPVILDYVCDDCSNHFENLKTYLDSLNIKYKVNPYIVRGLDYYTKTVFEIINNDITVCGGGRYNGLIEQIGGKPTPAVGFGMGIERLILTLMENNIEIPKPKEMDIFIGSMGDNGKIEAFKLVNALRTKGLKAECDHMNKSVKAQMKYANKIDASYSMIIGDTEIEEKKANLKRMEDGQQFEVSLNNLDEIASMILK.

It belongs to the class-II aminoacyl-tRNA synthetase family. Homodimer.

The protein resides in the cytoplasm. It carries out the reaction tRNA(His) + L-histidine + ATP = L-histidyl-tRNA(His) + AMP + diphosphate + H(+). The polypeptide is Histidine--tRNA ligase (Clostridium novyi (strain NT)).